The primary structure comprises 256 residues: Thiazole synthase (256 aa).

The active-site Schiff-base intermediate with DXP is Lys-95. 1-deoxy-D-xylulose 5-phosphate-binding positions include Gly-156, 182 to 183, and 204 to 205; these read AG and NT.

It belongs to the ThiG family. In terms of assembly, homotetramer. Forms heterodimers with either ThiH or ThiS.

The protein resides in the cytoplasm. It catalyses the reaction [ThiS sulfur-carrier protein]-C-terminal-Gly-aminoethanethioate + 2-iminoacetate + 1-deoxy-D-xylulose 5-phosphate = [ThiS sulfur-carrier protein]-C-terminal Gly-Gly + 2-[(2R,5Z)-2-carboxy-4-methylthiazol-5(2H)-ylidene]ethyl phosphate + 2 H2O + H(+). Its pathway is cofactor biosynthesis; thiamine diphosphate biosynthesis. Functionally, catalyzes the rearrangement of 1-deoxy-D-xylulose 5-phosphate (DXP) to produce the thiazole phosphate moiety of thiamine. Sulfur is provided by the thiocarboxylate moiety of the carrier protein ThiS. In vitro, sulfur can be provided by H(2)S. The protein is Thiazole synthase of Salmonella arizonae (strain ATCC BAA-731 / CDC346-86 / RSK2980).